Here is a 225-residue protein sequence, read N- to C-terminus: Small ribosomal subunit protein uS3 (225 aa).

The KH type-2 domain maps to 18–87 (VDEYLAKQFY…NPQITVTSVE (70 aa)).

Belongs to the universal ribosomal protein uS3 family. As to quaternary structure, part of the 30S ribosomal subunit.

Its function is as follows. Binds the lower part of the 30S subunit head. This is Small ribosomal subunit protein uS3 from Sulfurisphaera tokodaii (strain DSM 16993 / JCM 10545 / NBRC 100140 / 7) (Sulfolobus tokodaii).